We begin with the raw amino-acid sequence, 654 residues long: Protein fem-1 homolog A-like (654 aa).

ANK repeat units follow at residues 2–31 (DLHT…REEL), 40–70 (GGGT…SVEA), 82–111 (EGAP…SVNR), 115–145 (TNST…DLEV), 149–178 (HGHT…QVNR), 182–211 (KGNT…RMER), and 214–243 (YGMT…SHEQ). Ser108 carries the phosphoserine modification. The disordered stretch occupies residues 241 to 265 (HEQLSGTELPGEGSSQMAGNHCSTP). Residues 253–263 (GSSQMAGNHCS) are compositionally biased toward polar residues. TPR repeat units lie at residues 283 to 317 (VEAL…RHQG) and 375 to 408 (SYYI…QQNN). ANK repeat units follow at residues 519-561 (NGFT…DPDS) and 565-594 (DNNS…HMDA). Ser608 is subject to Phosphoserine.

The protein belongs to the fem-1 family. In terms of assembly, component of a CRL2 E3 ubiquitin-protein ligase complex, also named ECS (Elongin BC-CUL2/5-SOCS-box protein) complex, composed of CUL2, Elongin BC (ELOB and ELOC), RBX1 and substrate-specific adapter FEM1A.

Its subcellular location is the mitochondrion. The protein resides in the cytoplasm. It functions in the pathway protein modification; protein ubiquitination. Functionally, substrate-recognition component of a Cul2-RING (CRL2) E3 ubiquitin-protein ligase complex of the DesCEND (destruction via C-end degrons) pathway, which recognizes a C-degron located at the extreme C terminus of target proteins, leading to their ubiquitination and degradation. The C-degron recognized by the DesCEND pathway is usually a motif of less than ten residues and can be present in full-length proteins, truncated proteins or proteolytically cleaved forms. The CRL2(FEM1A) complex specifically recognizes proteins with an arginine at the C-terminus: recognizes and binds proteins ending with -Lys/Arg-Xaa-Arg and -Lys/Arg-Xaa-Xaa-Arg C-degrons, such as SIL1 or OR51B2, leading to their ubiquitination and degradation. The protein is Protein fem-1 homolog A-like of Mus musculus (Mouse).